Here is a 154-residue protein sequence, read N- to C-terminus: Pseudo histidine-containing phosphotransfer protein 6 (154 aa).

Met1 is modified (N-acetylmethionine). In terms of domain architecture, HPt spans 41 to 137 (SPNFVYDVIN…HYLKNMMHEL (97 aa)).

As to quaternary structure, interacts with AHK5.

The protein localises to the cytoplasm. It localises to the cytosol. The protein resides in the nucleus. Functions as a two-component phosphorelay mediator between cytokinin sensor histidine kinases and response regulators (B-type ARRs). Plays an important role in propagating cytokinin signal transduction. The sequence is that of Pseudo histidine-containing phosphotransfer protein 6 (AHP6) from Arabidopsis thaliana (Mouse-ear cress).